A 459-amino-acid polypeptide reads, in one-letter code: Bifunctional protein GlmU (459 aa).

Residues 1–229 (MSNYAIILAA…FDESLGVNDR (229 aa)) form a pyrophosphorylase region. UDP-N-acetyl-alpha-D-glucosamine contacts are provided by residues 8–11 (LAAG), lysine 22, glutamine 72, and 77–78 (GT). Residue aspartate 102 participates in Mg(2+) binding. Positions 139, 154, 169, and 227 each coordinate UDP-N-acetyl-alpha-D-glucosamine. A Mg(2+)-binding site is contributed by asparagine 227. A linker region spans residues 230-250 (VALATAEKVMRHRIARQHMVN). The segment at 251–459 (GVTVVNPDSA…NKKPHHPSQK (209 aa)) is N-acetyltransferase. Residues arginine 332 and lysine 350 each contribute to the UDP-N-acetyl-alpha-D-glucosamine site. Histidine 362 (proton acceptor) is an active-site residue. UDP-N-acetyl-alpha-D-glucosamine contacts are provided by tyrosine 365 and asparagine 376. Acetyl-CoA-binding positions include alanine 379, 385 to 386 (NY), serine 404, alanine 422, and arginine 439.

It in the N-terminal section; belongs to the N-acetylglucosamine-1-phosphate uridyltransferase family. The protein in the C-terminal section; belongs to the transferase hexapeptide repeat family. Homotrimer. Requires Mg(2+) as cofactor.

Its subcellular location is the cytoplasm. It catalyses the reaction alpha-D-glucosamine 1-phosphate + acetyl-CoA = N-acetyl-alpha-D-glucosamine 1-phosphate + CoA + H(+). It carries out the reaction N-acetyl-alpha-D-glucosamine 1-phosphate + UTP + H(+) = UDP-N-acetyl-alpha-D-glucosamine + diphosphate. It functions in the pathway nucleotide-sugar biosynthesis; UDP-N-acetyl-alpha-D-glucosamine biosynthesis; N-acetyl-alpha-D-glucosamine 1-phosphate from alpha-D-glucosamine 6-phosphate (route II): step 2/2. Its pathway is nucleotide-sugar biosynthesis; UDP-N-acetyl-alpha-D-glucosamine biosynthesis; UDP-N-acetyl-alpha-D-glucosamine from N-acetyl-alpha-D-glucosamine 1-phosphate: step 1/1. It participates in bacterial outer membrane biogenesis; LPS lipid A biosynthesis. Catalyzes the last two sequential reactions in the de novo biosynthetic pathway for UDP-N-acetylglucosamine (UDP-GlcNAc). The C-terminal domain catalyzes the transfer of acetyl group from acetyl coenzyme A to glucosamine-1-phosphate (GlcN-1-P) to produce N-acetylglucosamine-1-phosphate (GlcNAc-1-P), which is converted into UDP-GlcNAc by the transfer of uridine 5-monophosphate (from uridine 5-triphosphate), a reaction catalyzed by the N-terminal domain. The chain is Bifunctional protein GlmU from Streptococcus agalactiae serotype III (strain NEM316).